The primary structure comprises 1120 residues: Transcription-repair-coupling factor (1120 aa).

Residues Asp-591 to Ile-756 enclose the Helicase ATP-binding domain. ATP is bound at residue Gly-604–Thr-611. The short motif at Asp-709–Gln-712 is the DEEQ box element. The Helicase C-terminal domain maps to Ile-777–Asp-931.

In the N-terminal section; belongs to the UvrB family. It in the C-terminal section; belongs to the helicase family. RecG subfamily.

It is found in the cytoplasm. In terms of biological role, couples transcription and DNA repair by recognizing RNA polymerase (RNAP) stalled at DNA lesions. Mediates ATP-dependent release of RNAP and its truncated transcript from the DNA, and recruitment of nucleotide excision repair machinery to the damaged site. This is Transcription-repair-coupling factor from Rickettsia bellii (strain RML369-C).